A 418-amino-acid polypeptide reads, in one-letter code: Xanthosine permease (418 aa).

The Cytoplasmic segment spans residues 1-9; that stretch reads MSIAMRLKV. A helical membrane pass occupies residues 10–30; sequence MSFLQYFIWGSWLVTLGSYMI. Residues 31-41 are Periplasmic-facing; it reads NTLHFTGANVG. A helical transmembrane segment spans residues 42–62; the sequence is MVYSSKGIAAIIMPGIMGIIA. The Cytoplasmic segment spans residues 63–70; that stretch reads DKWLRAER. The next 2 helical transmembrane spans lie at 71-91 and 92-112; these read AYMLCHLVCAGVLFYAASVTD and PDMMFWVMLVNAMAFMPTIAL. Residues 113-136 lie on the Cytoplasmic side of the membrane; that stretch reads SNSVSYSCLAQAGLDPVTAFPPIR. Residues 137-157 traverse the membrane as a helical segment; the sequence is VFGTVGFIVAMWAVSLLHLEL. Over 158 to 159 the chain is Periplasmic; that stretch reads SS. The chain crosses the membrane as a helical span at residues 160–180; the sequence is LQLYIASGASLLLSAYALTLP. The Cytoplasmic segment spans residues 181–209; the sequence is KIPVAEKKATTSLASKLGLDAFVLFKNPR. The helical transmembrane segment at 210–230 threads the bilayer; sequence MAIFFLFAMMLGAVLQITNVF. The Periplasmic portion of the chain corresponds to 231–254; the sequence is GNPFLHDFARNPEFADSFVVKYPS. The helical transmembrane segment at 255–275 threads the bilayer; that stretch reads ILLSVSQMAEVGFILTIPFFL. The Cytoplasmic portion of the chain corresponds to 276–277; sequence KR. Residues 278 to 298 form a helical membrane-spanning segment; it reads FGIKTVMLMSMVAWTLRFGFF. Over 299 to 306 the chain is Periplasmic; it reads AYGDPSTT. A helical transmembrane segment spans residues 307–327; sequence GFILLLLSMIVYGCAFDFFNI. Topologically, residues 328–348 are cytoplasmic; sequence SGSVFVEQEVDSSIRASAQGL. Residues 349 to 369 form a helical membrane-spanning segment; the sequence is FMTMVNGVGAWVGSILSGMAV. Topologically, residues 370 to 381 are periplasmic; the sequence is DYFSVDGVKDWQ. A helical membrane pass occupies residues 382–402; the sequence is TIWLVFAGYALFLAVIFFFGF. Topologically, residues 403–418 are cytoplasmic; it reads KYNHDPEKIKHRAVTH.

Belongs to the major facilitator superfamily. Nucleoside:H(+) symporter (NHS) (TC 2.A.1.10) family.

The protein localises to the cell inner membrane. It catalyses the reaction xanthosine(in) + H(+)(in) = xanthosine(out) + H(+)(out). Transport is abolished by the proton uncoupler 2,4-dinitrophenol. Its function is as follows. Uptake of xanthosine. Can also transport other nucleosides such as inosine, adenosine, cytidine, uridine and thymidine. Transport is driven by a proton motive force. In Escherichia coli (strain K12), this protein is Xanthosine permease.